Consider the following 289-residue polypeptide: MNAKIRAYVALMKLRVVELLLITTVPVMMLADRGMPSLWLIAVTLVAGTLAAGSANTINCYVDRDIDQVMGRTKRRPLVRATVTPTEALTFGIVIGIVSTLMFGLLVNWPSALLADGAIAFYVFVYTLGLKRRTPSNIVIGGAAGCFPVLIGWSAVTGTVGWSAVLLFAVVFFWTPPHFWALAMKFRDDYAAAGIPMLPVVAPVEVVTRRIVGYSYAMVAASLALVPVAHTGPVYLVSAVVVGAWFLAEAHRIDRRTRRGDDPRPMRLFHMSITYLTLLFVAIAVTAVV.

9 consecutive transmembrane segments (helical) span residues 9 to 29 (VALMKLRVVELLLITTVPVMM), 35 to 55 (MPSLWLIAVTLVAGTLAAGSA), 89 to 109 (LTFGIVIGIVSTLMFGLLVNW), 110 to 130 (PSALLADGAIAFYVFVYTLGL), 138 to 158 (IVIGGAAGCFPVLIGWSAVTG), 164 to 184 (AVLLFAVVFFWTPPHFWALAM), 188 to 208 (DDYAAAGIPMLPVVAPVEVVT), 228 to 248 (VAHTGPVYLVSAVVVGAWFLA), and 269 to 289 (FHMSITYLTLLFVAIAVTAVV).

This sequence belongs to the UbiA prenyltransferase family. Protoheme IX farnesyltransferase subfamily.

The protein resides in the cell membrane. The catalysed reaction is heme b + (2E,6E)-farnesyl diphosphate + H2O = Fe(II)-heme o + diphosphate. Its pathway is porphyrin-containing compound metabolism; heme O biosynthesis; heme O from protoheme: step 1/1. In terms of biological role, converts heme B (protoheme IX) to heme O by substitution of the vinyl group on carbon 2 of heme B porphyrin ring with a hydroxyethyl farnesyl side group. This is Protoheme IX farnesyltransferase from Frankia alni (strain DSM 45986 / CECT 9034 / ACN14a).